A 96-amino-acid polypeptide reads, in one-letter code: Ribonuclease P protein component 1 (96 aa).

Belongs to the eukaryotic/archaeal RNase P protein component 1 family. As to quaternary structure, consists of a catalytic RNA component and at least 5 protein subunits.

Its subcellular location is the cytoplasm. The catalysed reaction is Endonucleolytic cleavage of RNA, removing 5'-extranucleotides from tRNA precursor.. Part of ribonuclease P, a protein complex that generates mature tRNA molecules by cleaving their 5'-ends. The chain is Ribonuclease P protein component 1 from Methanococcus maripaludis (strain DSM 14266 / JCM 13030 / NBRC 101832 / S2 / LL).